The primary structure comprises 102 residues: Small ribosomal subunit protein uS10 (102 aa).

It belongs to the universal ribosomal protein uS10 family. In terms of assembly, part of the 30S ribosomal subunit.

In terms of biological role, involved in the binding of tRNA to the ribosomes. This is Small ribosomal subunit protein uS10 from Clavibacter michiganensis subsp. michiganensis (strain NCPPB 382).